The primary structure comprises 354 residues: Threonine synthase (354 aa).

N6-(pyridoxal phosphate)lysine is present on Lys-61. Residues Asn-87, 187–191 (GNAGN), and Thr-316 contribute to the pyridoxal 5'-phosphate site.

The protein belongs to the threonine synthase family. Pyridoxal 5'-phosphate is required as a cofactor.

It catalyses the reaction O-phospho-L-homoserine + H2O = L-threonine + phosphate. The protein operates within amino-acid biosynthesis; L-threonine biosynthesis; L-threonine from L-aspartate: step 5/5. Catalyzes the gamma-elimination of phosphate from L-phosphohomoserine and the beta-addition of water to produce L-threonine. This is Threonine synthase (thrC) from Halalkalibacterium halodurans (strain ATCC BAA-125 / DSM 18197 / FERM 7344 / JCM 9153 / C-125) (Bacillus halodurans).